The following is a 215-amino-acid chain: Ribonuclease T (215 aa).

The Exonuclease domain occupies 20-194 (VVIDVETAGF…YDTERTAVLF (175 aa)). Residues D23, E25, H181, and D186 each contribute to the Mg(2+) site. The active-site Proton donor/acceptor is the H181.

This sequence belongs to the RNase T family. In terms of assembly, homodimer. It depends on Mg(2+) as a cofactor.

Trims short 3' overhangs of a variety of RNA species, leaving a one or two nucleotide 3' overhang. Responsible for the end-turnover of tRNA: specifically removes the terminal AMP residue from uncharged tRNA (tRNA-C-C-A). Also appears to be involved in tRNA biosynthesis, especially in strains lacking other exoribonucleases. In terms of biological role, a general regulator of small RNAs (sRNA), contributes to their degradation. Upon overexpression suppresses sRNA-mediated RhyB-silencing of multiple RNA targets; overexpression leads to nearly complete loss of RhyB sRNA. This chain is Ribonuclease T, found in Escherichia coli (strain K12).